We begin with the raw amino-acid sequence, 177 residues long: Ubiquinol-cytochrome c reductase iron-sulfur subunit (177 aa).

A helical membrane pass occupies residues Ile-18–Ile-38. Residues Ala-88–Arg-175 form the Rieske domain. Cys-120, His-122, Cys-139, and His-142 together coordinate [2Fe-2S] cluster. Cys-125 and Cys-141 are oxidised to a cystine.

Belongs to the Rieske iron-sulfur protein family. The main subunits of complex b-c1 are: cytochrome b, cytochrome c1 and the Rieske protein. Requires [2Fe-2S] cluster as cofactor.

The protein localises to the cell membrane. The catalysed reaction is a quinol + 2 Fe(III)-[cytochrome c](out) = a quinone + 2 Fe(II)-[cytochrome c](out) + 2 H(+)(out). Component of the ubiquinol-cytochrome c reductase complex (complex III or cytochrome b-c1 complex), which is a respiratory chain that generates an electrochemical potential coupled to ATP synthesis. The protein is Ubiquinol-cytochrome c reductase iron-sulfur subunit (petA) of Rickettsia typhi (strain ATCC VR-144 / Wilmington).